Here is a 116-residue protein sequence, read N- to C-terminus: Large ribosomal subunit protein bL19 (116 aa).

It belongs to the bacterial ribosomal protein bL19 family.

In terms of biological role, this protein is located at the 30S-50S ribosomal subunit interface and may play a role in the structure and function of the aminoacyl-tRNA binding site. In Azotobacter vinelandii (strain DJ / ATCC BAA-1303), this protein is Large ribosomal subunit protein bL19.